The following is a 368-amino-acid chain: Peptide chain release factor 2 (368 aa).

At Q250 the chain carries N5-methylglutamine.

This sequence belongs to the prokaryotic/mitochondrial release factor family. In terms of processing, methylated by PrmC. Methylation increases the termination efficiency of RF2.

The protein resides in the cytoplasm. Its function is as follows. Peptide chain release factor 2 directs the termination of translation in response to the peptide chain termination codons UGA and UAA. This Chlamydia abortus (strain DSM 27085 / S26/3) (Chlamydophila abortus) protein is Peptide chain release factor 2.